Consider the following 341-residue polypeptide: 3-keto-steroid reductase/17-beta-hydroxysteroid dehydrogenase 7 (341 aa).

The Extracellular portion of the chain corresponds to 1 to 229 (MRKVVLITGA…VACPGTALTN (229 aa)). 8-15 (TGASSGIG) serves as a coordination point for NAD(+). N-linked (GlcNAc...) asparagine glycosylation is present at asparagine 37. A substrate-binding site is contributed by serine 171. The N-linked (GlcNAc...) asparagine glycan is linked to asparagine 178. The active-site Proton acceptor is tyrosine 193. N-linked (GlcNAc...) asparagine glycosylation is present at asparagine 229. The chain crosses the membrane as a helical span at residues 230 to 250 (LTYGILPPFIWTLLMPAILLL). The Cytoplasmic portion of the chain corresponds to 251 to 341 (RFFANAFTLT…NQARLSGSCL (91 aa)).

The protein belongs to the short-chain dehydrogenases/reductases (SDR) family. ERG27 subfamily. In terms of assembly, binds to the short form of prolactin receptor. In terms of processing, phosphorylated. In terms of tissue distribution, highly expressed in adrenal gland, liver, lung and thymus. Expressed in breast, ovaries, pituitary gland, pregnant uterus, prostate, kidney, lymph node, small intestine, spinal cord and trachea. Weakly expressed in all other tissues tested. Expressed in eye ciliary epithelial cells and neuroendocrine cells.

It localises to the endoplasmic reticulum membrane. The catalysed reaction is 17beta-estradiol + NADP(+) = estrone + NADPH + H(+). It carries out the reaction a 3beta-hydroxysteroid + NADP(+) = a 3-oxosteroid + NADPH + H(+). It catalyses the reaction 3-dehydro-4alpha-methylzymosterol + NADPH + H(+) = 4alpha-methylzymosterol + NADP(+). The enzyme catalyses zymosterone + NADPH + H(+) = zymosterol + NADP(+). The catalysed reaction is 4alpha-methyl-5alpha-cholest-8-en-3-one + NADPH + H(+) = 4alpha-methyl-5alpha-cholest-8-en-3beta-ol + NADP(+). It carries out the reaction 4alpha-methyl-5alpha-cholest-7-en-3beta-ol + NADP(+) = 4alpha-methyl-5alpha-cholest-7-en-3-one + NADPH + H(+). It catalyses the reaction 5alpha-cholest-8-en-3-one + NADPH + H(+) = 5alpha-cholest-8-en-3beta-ol + NADP(+). The enzyme catalyses 5alpha-androstane-3beta,17beta-diol + NADP(+) = 17beta-hydroxy-5alpha-androstan-3-one + NADPH + H(+). The catalysed reaction is progesterone + NADPH + H(+) = 3beta-hydroxypregn-4-ene-20-one + NADP(+). It participates in steroid biosynthesis; estrogen biosynthesis. The protein operates within steroid biosynthesis; zymosterol biosynthesis; zymosterol from lanosterol: step 5/6. Estradiol 17-beta-dehydrogenase and dihydrotestosterone oxidoreductase activities are selectively inhibited by 4-methyl-4-aza-5alpha-androstane derivatives, such as 17beta-[(N-Heptyl)methylamino]-4-aza-5r-androstan-3-one and 17beta-(N-Decylformamido)-4-aza-5r-androstan-3-one. Functionally, bifunctional enzyme involved in steroid-hormone metabolism and cholesterol biosynthesis. Catalyzes the NADP(H)-dependent reduction of estrogens and androgens and regulates the biological potency of these steroids. Converts estrone (E1) to a more potent estrogen, 17beta-estradiol (E2). Converts dihydrotestosterone (DHT) to its inactive form 5a-androstane-3b,17b-diol. Converts moderately progesterone to 3beta-hydroxypregn-4-ene-20-one, leading to its inactivation. Additionally, participates in the post-squalene cholesterol biosynthesis, as a 3-ketosteroid reductase. Does not have enzymatic activities toward E1 and DHT. The sequence is that of 3-keto-steroid reductase/17-beta-hydroxysteroid dehydrogenase 7 (HSD17B7) from Homo sapiens (Human).